The sequence spans 263 residues: Oxygen-evolving enhancer protein 2, chloroplastic (263 aa).

Residues 1 to 78 (MAAASCFHAL…VGTKVSPADA (78 aa)) constitute a chloroplast transit peptide. The segment covering 14–30 (ARSSSSSLQSSSSRLPA) has biased composition (low complexity). Positions 14–34 (ARSSSSSLQSSSSRLPAPIKP) are disordered.

This sequence belongs to the PsbP family.

Its subcellular location is the plastid. The protein localises to the chloroplast thylakoid membrane. May be involved in the regulation of photosystem II. The chain is Oxygen-evolving enhancer protein 2, chloroplastic from Helianthus annuus (Common sunflower).